Here is a 100-residue protein sequence, read N- to C-terminus: Small ribosomal subunit protein uS14c (100 aa).

It belongs to the universal ribosomal protein uS14 family. Part of the 30S ribosomal subunit.

The protein localises to the plastid. It is found in the chloroplast. Binds 16S rRNA, required for the assembly of 30S particles. This is Small ribosomal subunit protein uS14c from Liriodendron tulipifera (Tuliptree).